Consider the following 148-residue polypeptide: D-aminoacyl-tRNA deacylase (148 aa).

The short motif at 137–138 is the Gly-cisPro motif, important for rejection of L-amino acids element; that stretch reads GP.

Belongs to the DTD family. As to quaternary structure, homodimer.

It localises to the cytoplasm. It catalyses the reaction glycyl-tRNA(Ala) + H2O = tRNA(Ala) + glycine + H(+). The catalysed reaction is a D-aminoacyl-tRNA + H2O = a tRNA + a D-alpha-amino acid + H(+). Functionally, an aminoacyl-tRNA editing enzyme that deacylates mischarged D-aminoacyl-tRNAs. Also deacylates mischarged glycyl-tRNA(Ala), protecting cells against glycine mischarging by AlaRS. Acts via tRNA-based rather than protein-based catalysis; rejects L-amino acids rather than detecting D-amino acids in the active site. By recycling D-aminoacyl-tRNA to D-amino acids and free tRNA molecules, this enzyme counteracts the toxicity associated with the formation of D-aminoacyl-tRNA entities in vivo and helps enforce protein L-homochirality. The polypeptide is D-aminoacyl-tRNA deacylase (Aquifex aeolicus (strain VF5)).